The primary structure comprises 208 residues: Uracil phosphoribosyltransferase (208 aa).

5-phospho-alpha-D-ribose 1-diphosphate-binding positions include Arg78, Arg103, and 130 to 138 (DPMLATGGS). Uracil contacts are provided by residues Ile193 and 198–200 (GDA). Asp199 is a 5-phospho-alpha-D-ribose 1-diphosphate binding site.

It belongs to the UPRTase family. Mg(2+) is required as a cofactor.

The catalysed reaction is UMP + diphosphate = 5-phospho-alpha-D-ribose 1-diphosphate + uracil. It functions in the pathway pyrimidine metabolism; UMP biosynthesis via salvage pathway; UMP from uracil: step 1/1. Its activity is regulated as follows. Allosterically activated by GTP. Functionally, catalyzes the conversion of uracil and 5-phospho-alpha-D-ribose 1-diphosphate (PRPP) to UMP and diphosphate. In Shewanella sediminis (strain HAW-EB3), this protein is Uracil phosphoribosyltransferase.